A 445-amino-acid chain; its full sequence is 6-phosphogluconate dehydrogenase, decarboxylating (445 aa).

Residues 1–4 (AVMG), 22–24 (NRS), 63–65 (VKA), and asparagine 91 contribute to the NADP(+) site. Substrate is bound by residues asparagine 91 and 117-119 (SGG). The active-site Proton acceptor is the lysine 172. A substrate-binding site is contributed by 175-176 (HN). Glutamate 179 functions as the Proton donor in the catalytic mechanism. Positions 180, 249, 276, 434, and 440 each coordinate substrate.

It belongs to the 6-phosphogluconate dehydrogenase family. As to quaternary structure, homodimer.

The enzyme catalyses 6-phospho-D-gluconate + NADP(+) = D-ribulose 5-phosphate + CO2 + NADPH. Its pathway is carbohydrate degradation; pentose phosphate pathway; D-ribulose 5-phosphate from D-glucose 6-phosphate (oxidative stage): step 3/3. Functionally, catalyzes the oxidative decarboxylation of 6-phosphogluconate to ribulose 5-phosphate and CO(2), with concomitant reduction of NADP to NADPH. The protein is 6-phosphogluconate dehydrogenase, decarboxylating (gnd) of Raoultella planticola (Klebsiella planticola).